Here is a 744-residue protein sequence, read N- to C-terminus: Protein zyg-11 homolog B (744 aa).

3 LRR repeats span residues 185–208, 216–236, and 237–261; these read LPRLESLDISNTSITDITALLACK, MHHLKCLKMTTTQILDVVREL, and KHLNHLDISDDKQFTSDIALRLLEQ.

This sequence belongs to the zyg-11 family. As to quaternary structure, interacts with ELOC/Elongin C. Part of an E3 ubiquitin ligase complex including ZYG11B, CUL2 and Elongin BC.

Its function is as follows. Serves as substrate adapter subunit in the E3 ubiquitin ligase complex ZYG11B-CUL2-Elongin BC. Acts redudantly with ZER1 to target substrates bearing N-terminal glycine degrons for proteasomal degradation. Involved in the clearance of proteolytic fragments generated by caspase cleavage during apoptosis since N-terminal glycine degrons are strongly enriched at caspase cleavage sites. Also important in the quality control of protein N-myristoylation in which N-terminal glycine degrons are conditionally exposed after a failure of N-myristoylation. In Mus musculus (Mouse), this protein is Protein zyg-11 homolog B.